The primary structure comprises 294 residues: Uracil-DNA glycosylase (294 aa).

Asp139 (proton acceptor) is an active-site residue.

It belongs to the uracil-DNA glycosylase (UDG) superfamily. UNG family.

It localises to the host nucleus. The catalysed reaction is Hydrolyzes single-stranded DNA or mismatched double-stranded DNA and polynucleotides, releasing free uracil.. Its function is as follows. Excises uracil residues from the DNA which can arise as a result of misincorporation of dUMP residues by DNA polymerase or deamination of cytosines. Therefore may reduce deleterious uracil incorporation into the viral genome, particularly in terminally differentiated cells which lack DNA repair enzymes. In Human herpesvirus 2 (strain 333) (HHV-2), this protein is Uracil-DNA glycosylase (UL2).